The primary structure comprises 409 residues: Sperm equatorial segment protein 1 (409 aa).

A signal peptide spans 1–18 (MKPVVLVALLWLWPSSFL). The N-linked (GlcNAc...) asparagine glycan is linked to N132. The tract at residues 141-223 (EPYIEKEPEP…TTNTQGTPNT (83 aa)) is disordered. Positions 167-177 (PEPEPESESAP) are enriched in acidic residues. Positions 198–208 (NKVRTGTSRMS) are enriched in polar residues. The span at 209–223 (TVITQTTNTQGTPNT) shows a compositional bias: low complexity.

Belongs to the SPESP1 family. Glycosylated. In testis there are two predominant forms of 77- and 67-kDa and a form of 47-kDa, whereas in epididymal sperm from caput, corpus, and cauda there are two forms of 47- and 43-kDa. Testis forms contain complex carbohydrate residues. Epididymal sperm forms are N-glycosylated. Then undergoes significant glycosylation in the testis and that the majority of these glycoconjugates are removed by the time sperm reach the caput epididymis.

The protein localises to the cytoplasmic vesicle. It is found in the secretory vesicle. The protein resides in the acrosome. Functionally, involved in fertilization ability of sperm. The sequence is that of Sperm equatorial segment protein 1 from Rattus norvegicus (Rat).